Here is a 1153-residue protein sequence, read N- to C-terminus: Bifunctional dioxygenase (DOX)-epoxy alcohol synthase (EAS) (1153 aa).

Residues Ser46 to Ser56 are compositionally biased toward low complexity. Residues Ser46–Thr113 form a disordered region. The span at Thr57–Gly74 shows a compositional bias: polar residues. Residues Glu81 to Ser98 show a composition bias toward basic and acidic residues. The tract at residues Thr177–Val525 is fatty acid alpha-dioxygenase. Residue His276 participates in heme b binding. Tyr454 is an active-site residue. Heme b is bound at residue His457. The interval Arg732–Glu1153 is epoxy alcohol synthase. Heme is bound at residue Cys1086.

In the N-terminal section; belongs to the peroxidase family. It in the C-terminal section; belongs to the cytochrome P450 family. As to quaternary structure, homotetramer. Heme b serves as cofactor. The cofactor is heme.

It catalyses the reaction (9Z)-octadecenoate + O2 = (8R)-hydroperoxy-(9Z)-octadecenoate. It carries out the reaction (9Z)-octadecenoate + O2 = 10-hydroperoxy-(8E)-octadecenoate. The catalysed reaction is (9Z,12Z)-octadecadienoate + O2 = (8E,10R,12Z)-10-hydroperoxyoctadeca-8,12-dienoate. The enzyme catalyses (9Z,12Z,15Z)-octadecatrienoate + O2 = (10R)-hydroperoxy-(8E,12Z,15Z)-octadecatrienoate. It catalyses the reaction (9Z,12Z,15Z)-octadecatrienoate + O2 = (8R)-hydroperoxy-(9Z,12Z,15Z)-octadecatrienoate. It carries out the reaction (11Z,14Z)-eicosadienoate + O2 = 12-hydroperoxy-(10E,14Z)-eicosadienoate. The catalysed reaction is (11Z,14Z,17Z)-eicosatrienoate + O2 = 12-hydroperoxy-(10E,14Z,17Z)-eicosatrienoate. The enzyme catalyses (12R,13S)-epoxy-(9Z)-octadecenoate + O2 = (12R,13S)-epoxy-(10R)-hydroperoxy-(8E)-octadecenoate. It catalyses the reaction (8E,10R,12Z)-10-hydroperoxyoctadeca-8,12-dienoate = (12S,13R)-epoxy-(10R)-hydroxy-(8E)-octadecenoate. It carries out the reaction (10R)-hydroperoxy-(8E,12Z,15Z)-octadecatrienoate = 12,13-epoxy-(10R)-hydroxy-(8E,15Z)-octadecadienoate. The catalysed reaction is 12-hydroperoxy-(10E,14Z)-eicosadienoate = 10,11-epoxy-12-hydroxy-(14Z)-eicosenoate. The enzyme catalyses 12-hydroperoxy-(10E,14Z,17Z)-eicosatrienoate = 14,15-epoxy-12-hydroxy-(10E,17Z)-eicosadienoate. It catalyses the reaction (13R)-hydroperoxy-(9Z,11E)-octadecadienoate = (12R,13R)-epoxy-(11S)-hydroxy-(9Z)-octadecenoate. It carries out the reaction (13S)-hydroperoxy-(9Z,11E)-octadecadienoate = (12R,13R)-epoxy-(11S)-hydroxy-(9Z)-octadecenoate. The catalysed reaction is 12-hydroperoxy-(10E,14Z)-eicosadienoate = 14,15-epoxy-12-hydroxy-(10E)-eicosenoate. The enzyme catalyses 12-hydroperoxy-(10E,14Z,17Z)-eicosatrienoate = 10,11-epoxy-12-hydroxy-(14Z,17Z)-eicosadienoate. Functionally, bifunctional dioxygenase (DOX)-epoxy alcohol synthase (EAS) that converts linoleic acid (18:2n-6) sequentially to 10(R)-hydroperoxy-8(E),12(Z)-octadecadienoic acid (10R-HPODE) and 10R-HPODE further to 12 S(13R)-epoxy-10(R)-hydroxy-8(E)-octadecenoic acid as the end product. Oxygenation at C-10 occurs by retention of the pro-R hydrogen of C-8 of 18:2n-6, suggesting antarafacial hydrogen abstraction and oxygenation. The epoxy alcohol is formed from 10R-HPODE, likely by heterolytic cleavage of the dioxygen bond and subsequent intramolecular epoxidation of the 12(Z) double bond. The DOX domain is also able to oxygenate position C-8 of linoleic acid to produce 8(R)-hydroperoxy-8(E),12(Z)-octadecadienoic acid (8R-HPODE). Moreover, the DOX domain can oxygenate alpha-linolenic acid (18:3n-3) at C-8 or C-10 to produce respectively 8HOTrE and 10HOTrE, oleic acid (18:1n-9) at C-8 or C-10 to produce respectively 8-H(P)OME and 10-H(P)OME (with 8R stereoisomer to over 95%), eicosadienoic acid (20:2n-6) at C-10 or C-12 to produce respectively 10(11)-epoxy-12-hydroxy-14(Z)-eicosenoic acid and 14(15)-epoxy-12-hydroxy-10(E)-eicosenoic acid, as well as eicosatrienoic acid (20:3n-3) at C-10 or C-12 to produce respectively 10(11)-epoxy-12-hydroxy-14(Z),17(Z)-eicosadienoic acid and 14(15)-epoxy-12-hydroxy-14(Z),17(Z)-eicosadienoic acid. On the other side, the enzyme EAS domain can also catalyze the conversion of 10HOTrE into 12(13)-epoxy-10(R)-hydroxy-8(E),15(Z)-octadecadienoic acid, 13-R-HPODE into the stereoisomers of 12(13)-epoxy-11-hydroxy-9(Z)-octadecenoic acids (erythro/threo, 1:4), as well as 13S-HPODE into the stereoisomers of 12(13)-epoxy-11-hydroxy-9(Z)-octadecenoic acids (erythro/threo, 1:4) (EAS activity). Gamma-linolenic acid (18:3n-6) is not a substrate. This chain is Bifunctional dioxygenase (DOX)-epoxy alcohol synthase (EAS), found in Pyricularia oryzae (strain 70-15 / ATCC MYA-4617 / FGSC 8958) (Rice blast fungus).